Here is a 509-residue protein sequence, read N- to C-terminus: Maturase K (509 aa).

Belongs to the intron maturase 2 family. MatK subfamily.

It localises to the plastid. It is found in the chloroplast. Its function is as follows. Usually encoded in the trnK tRNA gene intron. Probably assists in splicing its own and other chloroplast group II introns. The sequence is that of Maturase K from Austrocylindropuntia vestita (Cactus).